The chain runs to 237 residues: Orotidine 5'-phosphate decarboxylase (237 aa).

Residues D11, K34, 61–70 (DLKLHDIPNT), T123, R185, Q194, G214, and R215 each bind substrate. K63 serves as the catalytic Proton donor.

Belongs to the OMP decarboxylase family. Type 1 subfamily. As to quaternary structure, homodimer.

The catalysed reaction is orotidine 5'-phosphate + H(+) = UMP + CO2. It functions in the pathway pyrimidine metabolism; UMP biosynthesis via de novo pathway; UMP from orotate: step 2/2. Functionally, catalyzes the decarboxylation of orotidine 5'-monophosphate (OMP) to uridine 5'-monophosphate (UMP). This is Orotidine 5'-phosphate decarboxylase from Ligilactobacillus salivarius (strain UCC118) (Lactobacillus salivarius).